A 409-amino-acid polypeptide reads, in one-letter code: Elongation factor Tu (409 aa).

The region spanning 10–214 (KPHVNIGTIG…AVDDNIPEPE (205 aa)) is the tr-type G domain. Positions 19–26 (GHVDHGKT) are G1. 19 to 26 (GHVDHGKT) contributes to the GTP binding site. Residue Thr-26 coordinates Mg(2+). The tract at residues 60 to 64 (GITIN) is G2. The G3 stretch occupies residues 81 to 84 (DCPG). Residues 81-85 (DCPGH) and 136-139 (NKKD) contribute to the GTP site. Residues 136-139 (NKKD) are G4. The segment at 174-176 (SAL) is G5.

This sequence belongs to the TRAFAC class translation factor GTPase superfamily. Classic translation factor GTPase family. EF-Tu/EF-1A subfamily. Monomer.

It localises to the cytoplasm. The catalysed reaction is GTP + H2O = GDP + phosphate + H(+). Functionally, GTP hydrolase that promotes the GTP-dependent binding of aminoacyl-tRNA to the A-site of ribosomes during protein biosynthesis. The chain is Elongation factor Tu from Crocosphaera subtropica (strain ATCC 51142 / BH68) (Cyanothece sp. (strain ATCC 51142)).